Reading from the N-terminus, the 394-residue chain is L-lactate dehydrogenase (394 aa).

The region spanning Met1–Glu380 is the FMN hydroxy acid dehydrogenase domain. Tyr24 is a substrate binding site. Residues Ser106 and Gln127 each contribute to the FMN site. Tyr129 contributes to the substrate binding site. Position 155 (Thr155) interacts with FMN. Substrate is bound at residue Arg164. Lys251 provides a ligand contact to FMN. His275 (proton acceptor) is an active-site residue. Arg278 lines the substrate pocket. Asp306 to Arg330 serves as a coordination point for FMN.

It belongs to the FMN-dependent alpha-hydroxy acid dehydrogenase family. Requires FMN as cofactor.

It is found in the cell inner membrane. It catalyses the reaction (S)-lactate + A = pyruvate + AH2. In terms of biological role, catalyzes the conversion of L-lactate to pyruvate. Is coupled to the respiratory chain. The polypeptide is L-lactate dehydrogenase (Klebsiella pneumoniae subsp. pneumoniae (strain ATCC 700721 / MGH 78578)).